Here is a 519-residue protein sequence, read N- to C-terminus: Putative thymidine phosphorylase (519 aa).

Belongs to the thymidine/pyrimidine-nucleoside phosphorylase family. Type 2 subfamily.

The enzyme catalyses thymidine + phosphate = 2-deoxy-alpha-D-ribose 1-phosphate + thymine. This chain is Putative thymidine phosphorylase, found in Maricaulis maris (strain MCS10) (Caulobacter maris).